A 223-amino-acid chain; its full sequence is MAGEGLGQQGASATAAPETREHLFKVLVIGELGVGKTSIIKRYVHQLFSQHYRATIGVDFALKVLNWDSRTLVRLQLWDIAGQERFGNMTRVYYKEALGAFVVFDISRSSTFDAVLKWKNDLDSKVHLPNGSPIPAVLLANKCDQKKDNSQSPSQMDQFCKDHGFTGWFETSAKDNINIDEATRFLVENMLANQQSFPSEEIDLDRIKLVEEPPTTKPRSQCC.

Alanine 2 carries the N-acetylalanine modification. The GTP site is built by valine 34, glycine 35, lysine 36, threonine 37, serine 38, serine 49, glutamine 50, tyrosine 52, and threonine 55. A Mg(2+)-binding site is contributed by threonine 37. The Switch 1 motif lies at glutamine 46 to phenylalanine 60. Threonine 55 contacts Mg(2+). Serine 69 is subject to Phosphoserine. Aspartate 79 is a binding site for Mg(2+). Glycine 82, asparagine 141, lysine 142, aspartate 144, alanine 173, and lysine 174 together coordinate GTP. Residues glycine 82–lysine 95 carry the Switch 2 motif. Positions asparagine 176 to glutamine 195 are PKA-RII subunit binding domain. Residues cysteine 222 and cysteine 223 are each lipidated (S-geranylgeranyl cysteine).

The protein belongs to the small GTPase superfamily. Rab family. In terms of assembly, interacts with ANKRD27. A decreased interaction with ANKRD27 seen in the presence of SGSM2. Interacts with LRRK2 (via N-terminus); this interaction results in stimulation of RAB10 phosphorylation by LRRK2. Requires Mg(2+) as cofactor. In terms of tissue distribution, widely expressed with highest levels in liver. Strong expression also found in melanocyte, platelet, mast cell and fibroblast cell lines.

Its subcellular location is the mitochondrion. It is found in the mitochondrion outer membrane. The protein localises to the cytoplasmic vesicle. The protein resides in the phagosome. It localises to the phagosome membrane. Its subcellular location is the melanosome. It is found in the melanosome membrane. It catalyses the reaction GTP + H2O = GDP + phosphate + H(+). With respect to regulation, regulated by guanine the nucleotide exchange factor (GEF) BLOC-3 complex composed of HPS1 and HPS4 which promote the exchange of bound GDP for free GTP. Regulated by the GTPase activating protein (GAP) SGSM2/RUTBC1 which increases the GTP hydrolysis activity. Inhibited by GDP dissociation inhibitors (GDIs) which prevent Rab-GDP dissociation. Functionally, the small GTPases Rab are key regulators of intracellular membrane trafficking, from the formation of transport vesicles to their fusion with membranes. Rabs cycle between an inactive GDP-bound form and an active GTP-bound form that is able to recruit to membranes different set of downstream effectors directly responsible for vesicle formation, movement, tethering and fusion. Also acts as an A-kinase anchoring protein by binding to the type II regulatory subunit of protein kinase A and anchoring it to the mitochondrion. Also involved in synchronization of mitochondrial fission. Plays a role in the maturation of phagosomes that engulf pathogens, such as S.aureus and M.tuberculosis. Plays an important role in the control of melanin production and melanosome biogenesis. In concert with RAB38, regulates the proper trafficking of melanogenic enzymes TYR, TYRP1 and DCT/TYRP2 to melanosomes in melanocytes. Stimulates phosphorylation of RAB10 'Thr-73' by LRRK2. In Mus musculus (Mouse), this protein is Ras-related protein Rab-32.